Here is a 2547-residue protein sequence, read N- to C-terminus: Lovastatin diketide synthase mokB (2547 aa).

A Ketosynthase family 3 (KS3) domain is found at Pro-10–Arg-430. Active-site for beta-ketoacyl synthase activity residues include Cys-183, His-318, and His-353. Residues Val-545–Val-890 are acyl and malonyl transferase. Residue Ser-635 is the For malonyltransferase activity of the active site. The tract at residues His-941 to Pro-1079 is N-terminal hotdog fold. The PKS/mFAS DH domain maps to His-941–Asp-1252. Residue His-973 is the Proton acceptor; for dehydratase activity of the active site. A dehydratase-like region spans residues His-973–Gly-985. The C-terminal hotdog fold stretch occupies residues Ser-1095–Asp-1252. Asp-1160 serves as the catalytic Proton donor; for dehydratase activity. Residues Cys-1340 and Cys-1379 are joined by a disulfide bond. The segment at Tyr-1510–Thr-1547 is methyltransferase. One can recognise a Carrier domain in the interval Ala-2459 to Tyr-2541. Position 2501 is an O-(pantetheine 4'-phosphoryl)serine (Ser-2501).

The cofactor is pantetheine 4'-phosphate.

The catalysed reaction is holo-[2-methylbutanoate polyketide synthase] + 2 malonyl-CoA + S-adenosyl-L-methionine + 2 NADPH + 3 H(+) = (S)-2-methylbutanoyl-[2-methylbutanoate polyketide synthase] + S-adenosyl-L-homocysteine + 2 CO2 + 2 NADP(+) + 2 CoA + H2O. The protein operates within polyketide biosynthesis; lovastatin biosynthesis. Functionally, diketide synthase; part of the gene cluster that mediates the biosynthesis of monakolin K, also known as lovastatin, and which acts as a potent competitive inhibitor of HMG-CoA reductase. Monakolin K biosynthesis is performed in two stages. The first stage is catalyzed by the nonaketide synthase mokA, which belongs to type I polyketide synthases and catalyzes the iterative nine-step formation of the polyketide. This PKS stage completed by the action of dehydrogenase mokE, which catalyzes the NADPH-dependent reduction of the unsaturated tetra-, penta- and heptaketide intermediates that arise during the mokA-mediated biosynthesis of the nonaketide chain and leads to dihydromonacolin L. Covalently bound dihydromonacolin L is released from mokA by the mokD esterase. Conversion of dihydromonacolin L into monacolin L and then monacolin J is subsequently performed with the participation of molecular oxygen and P450 monoogygenase mokC. Finally, mokF performs the conversion of monacoline J to monacoline K through the addition of the side-chain diketide moiety (2R)-2-methylbutanoate produced by the diketide synthase mokB. The sequence is that of Lovastatin diketide synthase mokB from Monascus pilosus (Red mold).